The sequence spans 374 residues: Chaperone protein DnaJ (374 aa).

Positions 4-68 (DYYEILGVSR…ETRNRYDRFG (65 aa)) constitute a J domain. The segment at 133–215 (GGEKEIRIRH…CGGSGRRQET (83 aa)) adopts a CR-type zinc-finger fold. Positions 146, 149, 163, 166, 189, 192, 203, and 206 each coordinate Zn(2+). CXXCXGXG motif repeat units lie at residues 146-153 (CQTCKGSG), 163-170 (CTTCSGTG), 189-196 (CPTCDGAG), and 203-210 (CDVCGGSG).

Belongs to the DnaJ family. Homodimer. Zn(2+) is required as a cofactor.

The protein localises to the cytoplasm. Functionally, participates actively in the response to hyperosmotic and heat shock by preventing the aggregation of stress-denatured proteins and by disaggregating proteins, also in an autonomous, DnaK-independent fashion. Unfolded proteins bind initially to DnaJ; upon interaction with the DnaJ-bound protein, DnaK hydrolyzes its bound ATP, resulting in the formation of a stable complex. GrpE releases ADP from DnaK; ATP binding to DnaK triggers the release of the substrate protein, thus completing the reaction cycle. Several rounds of ATP-dependent interactions between DnaJ, DnaK and GrpE are required for fully efficient folding. Also involved, together with DnaK and GrpE, in the DNA replication of plasmids through activation of initiation proteins. This Microcystis aeruginosa (strain NIES-843 / IAM M-2473) protein is Chaperone protein DnaJ.